The primary structure comprises 372 residues: Protein phosphatase Mn(2+)-dependent 1K (372 aa).

Residues 1–29 constitute a mitochondrion transit peptide; that stretch reads MSTAALLTLVRSGGNQVRRRVLLRARGLQ. The segment at 46-61 is critical for association with the BCKDH complex; sequence KWSRFDPDGSGRPATW. Positions 94 to 346 constitute a PPM-type phosphatase domain; sequence NVGSASQIGK…DNTTAVVVPF (253 aa). Mn(2+) is bound by residues Asp127 and Gly128. Ser248 bears the Phosphoserine mark. Mn(2+) contacts are provided by Asp298 and Asp337.

Belongs to the PP2C family. As to quaternary structure, monomer. Interacts with E1 and E2 components of the branched-chain alpha-ketoacid dehydrogenase (BCKDH) complex; this interaction requires colocalization in mitochondria. Interacts with BCKDHA but not with BCKDHB of the E1 component. Interacts with the 24-meric E2 core composed of DBT monomers with a 24:1 stoichiometry; the N-terminal region (residues 49-61) of PPM1K and C-terminal linker of the lipoyl domain of DBT (residues 145-160) are critical for this interaction, whereas the lipoyl prosthetic group is dispensable. Competes with BCKDK for binding to the E2 core; this interaction is modulated by branched-chain alpha-keto acids. At steady state, BCKDH holoenzyme preferentially binds BCKDK and BCKDHA is phosphorylated. In response to high levels of branched-chain alpha-keto acids, the inhibitory BCKDK is replaced by activating PPM1K leading to BCKDHA dephosphorylation and BCAA degradation. Mn(2+) is required as a cofactor.

It localises to the mitochondrion matrix. The catalysed reaction is O-phospho-L-seryl-[3-methyl-2-oxobutanoate dehydrogenase] + H2O = L-seryl-[3-methyl-2-oxobutanoate dehydrogenase] + phosphate. The enzyme catalyses O-phospho-L-seryl-[protein] + H2O = L-seryl-[protein] + phosphate. The protein operates within protein modification. Functionally, serine/threonine-protein phosphatase component of macronutrients metabolism. Forms a functional kinase and phosphatase pair with BCKDK, serving as a metabolic regulatory node that coordinates branched-chain amino acids (BCAAs) with glucose and lipid metabolism via two distinct phosphoprotein targets: mitochondrial BCKDHA subunit of the branched-chain alpha-ketoacid dehydrogenase (BCKDH) complex and cytosolic ACLY, a lipogenic enzyme of Krebs cycle. At high levels of branched-chain ketoacids, dephosphorylates and activates mitochondrial BCKDH complex, a multisubunit complex consisting of three multimeric components each involved in different steps of BCAA catabolism: E1 composed of BCKDHA and BCKDHB, E2 core composed of DBT monomers, and E3 composed of DLD monomers. Tightly associates with the E2 component of BCKDH complex and dephosphorylates BCKDHA on Ser-347. Regulates the reversible phosphorylation of ACLY in response to changes in cellular carbohydrate abundance such as occurs during fasting to feeding metabolic transition. At fasting state, appears to dephosphorylate ACLY on Ser-455 and inactivate it. Refeeding stimulates MLXIPL/ChREBP transcription factor, leading to increased BCKDK to PPM1K expression ratio, phosphorylation and activation of ACLY that ultimately results in the generation of malonyl-CoA and oxaloacetate immediate substrates of de novo lipogenesis and gluconeogenesis, respectively. Recognizes phosphosites having SxS or RxxS motifs and strictly depends on Mn(2+) ions for the phosphatase activity. Regulates Ca(2+)-induced opening of mitochondrial transition pore and apoptotic cell death. The protein is Protein phosphatase Mn(2+)-dependent 1K (PPM1K) of Bos taurus (Bovine).